Consider the following 205-residue polypeptide: Proteasome subunit beta type-3 (205 aa).

Ser-2 carries the N-acetylserine modification. Lys-77 is modified (N6-acetyllysine).

This sequence belongs to the peptidase T1B family. The 26S proteasome consists of a 20S proteasome core and two 19S regulatory subunits. The 20S proteasome core is a barrel-shaped complex made of 28 subunits that are arranged in four stacked rings. The two outer rings are each formed by seven alpha subunits, and the two inner rings are formed by seven beta subunits. The proteolytic activity is exerted by three beta-subunits PSMB5, PSMB6 and PSMB7. In terms of assembly, (Microbial infection) Interacts with HIV-1 TAT protein.

It localises to the cytoplasm. The protein localises to the nucleus. Functionally, non-catalytic component of the 20S core proteasome complex involved in the proteolytic degradation of most intracellular proteins. This complex plays numerous essential roles within the cell by associating with different regulatory particles. Associated with two 19S regulatory particles, forms the 26S proteasome and thus participates in the ATP-dependent degradation of ubiquitinated proteins. The 26S proteasome plays a key role in the maintenance of protein homeostasis by removing misfolded or damaged proteins that could impair cellular functions, and by removing proteins whose functions are no longer required. Associated with the PA200 or PA28, the 20S proteasome mediates ubiquitin-independent protein degradation. This type of proteolysis is required in several pathways including spermatogenesis (20S-PA200 complex) or generation of a subset of MHC class I-presented antigenic peptides (20S-PA28 complex). The chain is Proteasome subunit beta type-3 from Homo sapiens (Human).